The primary structure comprises 1171 residues: ATP-dependent helicase/deoxyribonuclease subunit B (1171 aa).

Residues 1 to 343 (MSLRFVIGRA…LVAEENYRYR (343 aa)) enclose the UvrD-like helicase ATP-binding domain. 8 to 15 (GRAGSGKS) lines the ATP pocket. In terms of domain architecture, UvrD-like helicase C-terminal spans 281–587 (MEQPRFHSPA…QFANIPPSLD (307 aa)). [4Fe-4S] cluster is bound by residues Cys-805, Cys-1129, Cys-1132, and Cys-1138.

The protein belongs to the helicase family. AddB/RexB type 1 subfamily. As to quaternary structure, heterodimer of AddA and AddB. Mg(2+) is required as a cofactor. [4Fe-4S] cluster serves as cofactor.

Its function is as follows. The heterodimer acts as both an ATP-dependent DNA helicase and an ATP-dependent, dual-direction single-stranded exonuclease. Recognizes the chi site generating a DNA molecule suitable for the initiation of homologous recombination. The AddB subunit has 5' -&gt; 3' nuclease activity but not helicase activity. This Bacillus anthracis protein is ATP-dependent helicase/deoxyribonuclease subunit B.